The primary structure comprises 231 residues: DNA mismatch repair protein MutH (231 aa).

This sequence belongs to the MutH family.

Its subcellular location is the cytoplasm. In terms of biological role, sequence-specific endonuclease that cleaves unmethylated GATC sequences. It is involved in DNA mismatch repair. This Salmonella paratyphi C (strain RKS4594) protein is DNA mismatch repair protein MutH.